A 202-amino-acid polypeptide reads, in one-letter code: Probable nicotinate-nucleotide adenylyltransferase (202 aa).

Belongs to the NadD family.

It carries out the reaction nicotinate beta-D-ribonucleotide + ATP + H(+) = deamido-NAD(+) + diphosphate. It participates in cofactor biosynthesis; NAD(+) biosynthesis; deamido-NAD(+) from nicotinate D-ribonucleotide: step 1/1. Its function is as follows. Catalyzes the reversible adenylation of nicotinate mononucleotide (NaMN) to nicotinic acid adenine dinucleotide (NaAD). This is Probable nicotinate-nucleotide adenylyltransferase from Clostridium perfringens (strain SM101 / Type A).